We begin with the raw amino-acid sequence, 241 residues long: MAKWGSPFVFALACLALSWRVYGDDFDLYDALGDPTEKPKPKPPKPPKSPTHDSGDLDLSDFFDTPVKTTTKSPRLPPKQPDLRFSTTTKKPRTTKIPPKKSDPNDFDLSDALDGNNGKGDISDSDLDDILNDGYNPDKKKGGGGGGGGGGRATGQGDNDGSDTGFGSQAETGTIAGIASALAMALIGAVSSYISYQQKKFCFSIQEGLNAEYVKGEHMEAVVSEEPQVKYSVVESQSAIP.

The signal sequence occupies residues Met-1–Gly-23. Residues Asp-24–Gly-173 lie on the Extracellular side of the membrane. A disordered region spans residues Asp-30–Ser-168. Gly residues predominate over residues Gly-143–Thr-154. The helical transmembrane segment at Thr-174 to Tyr-196 threads the bilayer. At Gln-197–Pro-241 the chain is on the cytoplasmic side.

It belongs to the CD99 family.

Its subcellular location is the cell membrane. It is found in the cell junction. Its function is as follows. May function as a homophilic adhesion molecule. The protein is CD99 antigen-like protein 2 (cd99l2) of Xenopus tropicalis (Western clawed frog).